The chain runs to 204 residues: Histidine biosynthesis bifunctional protein HisIE (204 aa).

The segment at 1 to 114 (MLTEQQINQL…FAPAASDWSF (114 aa)) is phosphoribosyl-AMP cyclohydrolase. The tract at residues 115-204 (LYQLEQLLAS…IGRLRERHEK (90 aa)) is phosphoribosyl-ATP pyrophosphohydrolase.

In the N-terminal section; belongs to the PRA-CH family. It in the C-terminal section; belongs to the PRA-PH family.

It localises to the cytoplasm. It catalyses the reaction 1-(5-phospho-beta-D-ribosyl)-ATP + H2O = 1-(5-phospho-beta-D-ribosyl)-5'-AMP + diphosphate + H(+). The catalysed reaction is 1-(5-phospho-beta-D-ribosyl)-5'-AMP + H2O = 1-(5-phospho-beta-D-ribosyl)-5-[(5-phospho-beta-D-ribosylamino)methylideneamino]imidazole-4-carboxamide. Its pathway is amino-acid biosynthesis; L-histidine biosynthesis; L-histidine from 5-phospho-alpha-D-ribose 1-diphosphate: step 2/9. It functions in the pathway amino-acid biosynthesis; L-histidine biosynthesis; L-histidine from 5-phospho-alpha-D-ribose 1-diphosphate: step 3/9. The chain is Histidine biosynthesis bifunctional protein HisIE (hisI) from Yersinia pestis.